The following is a 465-amino-acid chain: ATP synthase subunit beta (465 aa).

Position 149-156 (Gly149–Thr156) interacts with ATP.

It belongs to the ATPase alpha/beta chains family. F-type ATPases have 2 components, CF(1) - the catalytic core - and CF(0) - the membrane proton channel. CF(1) has five subunits: alpha(3), beta(3), gamma(1), delta(1), epsilon(1). CF(0) has three main subunits: a(1), b(2) and c(9-12). The alpha and beta chains form an alternating ring which encloses part of the gamma chain. CF(1) is attached to CF(0) by a central stalk formed by the gamma and epsilon chains, while a peripheral stalk is formed by the delta and b chains.

Its subcellular location is the cell inner membrane. The enzyme catalyses ATP + H2O + 4 H(+)(in) = ADP + phosphate + 5 H(+)(out). In terms of biological role, produces ATP from ADP in the presence of a proton gradient across the membrane. The catalytic sites are hosted primarily by the beta subunits. This Dictyoglomus thermophilum (strain ATCC 35947 / DSM 3960 / H-6-12) protein is ATP synthase subunit beta.